Here is a 472-residue protein sequence, read N- to C-terminus: Probable glycine dehydrogenase (decarboxylating) subunit 2 (472 aa).

An N6-(pyridoxal phosphate)lysine modification is found at Lys-268.

The protein belongs to the GcvP family. C-terminal subunit subfamily. In terms of assembly, the glycine cleavage system is composed of four proteins: P, T, L and H. In this organism, the P 'protein' is a heterodimer of two subunits. It depends on pyridoxal 5'-phosphate as a cofactor.

It catalyses the reaction N(6)-[(R)-lipoyl]-L-lysyl-[glycine-cleavage complex H protein] + glycine + H(+) = N(6)-[(R)-S(8)-aminomethyldihydrolipoyl]-L-lysyl-[glycine-cleavage complex H protein] + CO2. Functionally, the glycine cleavage system catalyzes the degradation of glycine. The P protein binds the alpha-amino group of glycine through its pyridoxal phosphate cofactor; CO(2) is released and the remaining methylamine moiety is then transferred to the lipoamide cofactor of the H protein. The chain is Probable glycine dehydrogenase (decarboxylating) subunit 2 from Thermoplasma acidophilum (strain ATCC 25905 / DSM 1728 / JCM 9062 / NBRC 15155 / AMRC-C165).